Reading from the N-terminus, the 395-residue chain is MATVDRWLLPDGIEEVLPPEAARIEAARRQVLDLFQRWGYEFVVTPHIEYLESLLTGAGQDLDLRTFKVTDPLSGRQMGFRADITPQVARIDAHTLRREGPNRLCYAGSVLHAQPRALTTSRSPIQLGAELYGDASPASDIEVISLLVETLELAAVPDVHMDLGHVGIYRGLARAAGLSGEVEQQLFDALQRKAMDEIEALTAALPAGLGNMLRSLAELCGGREVLDLAQAALVEAPDAVHAALDELVAIADALELRYPELPLYFDLGELRGYNYHTGVVFAAFVPGEGGAIAQGGRYDDTGAVFGRARPATGFSTDLKTLVTLGDMRLDEAVRGVWAPDNHDLYLWQAVRRLRSEGERVVQALPGQSEADAREAGCDRLLALRDGRWQVAPLAS.

The protein belongs to the class-II aminoacyl-tRNA synthetase family. HisZ subfamily. As to quaternary structure, heteromultimer composed of HisG and HisZ subunits.

The protein resides in the cytoplasm. The protein operates within amino-acid biosynthesis; L-histidine biosynthesis; L-histidine from 5-phospho-alpha-D-ribose 1-diphosphate: step 1/9. Functionally, required for the first step of histidine biosynthesis. May allow the feedback regulation of ATP phosphoribosyltransferase activity by histidine. The polypeptide is ATP phosphoribosyltransferase regulatory subunit (Ectopseudomonas mendocina (strain ymp) (Pseudomonas mendocina)).